The chain runs to 430 residues: Glutamate-1-semialdehyde 2,1-aminomutase (430 aa).

Lysine 269 carries the post-translational modification N6-(pyridoxal phosphate)lysine.

It belongs to the class-III pyridoxal-phosphate-dependent aminotransferase family. HemL subfamily. Homodimer. It depends on pyridoxal 5'-phosphate as a cofactor.

The protein resides in the cytoplasm. The catalysed reaction is (S)-4-amino-5-oxopentanoate = 5-aminolevulinate. The protein operates within porphyrin-containing compound metabolism; protoporphyrin-IX biosynthesis; 5-aminolevulinate from L-glutamyl-tRNA(Glu): step 2/2. The polypeptide is Glutamate-1-semialdehyde 2,1-aminomutase (Desulfitobacterium hafniense (strain DSM 10664 / DCB-2)).